The sequence spans 315 residues: Methionyl-tRNA formyltransferase (315 aa).

The interval 2–189 (SESLRIIFAG…LITTLKQLAD (188 aa)) is N-terminal domain. Residue 113–116 (SLLP) participates in (6S)-5,6,7,8-tetrahydrofolate binding. The interval 210–315 (KEEARIDWSL…EWFVPGNRLV (106 aa)) is C-terminal domain.

The protein belongs to the Fmt family. As to quaternary structure, monomer.

The enzyme catalyses L-methionyl-tRNA(fMet) + (6R)-10-formyltetrahydrofolate = N-formyl-L-methionyl-tRNA(fMet) + (6S)-5,6,7,8-tetrahydrofolate + H(+). Activity is optimum in the presence of Mg(2+) and K(+). Functionally, attaches a formyl group to the free amino group of methionyl-tRNA(fMet). The formyl group appears to play a dual role in the initiator identity of N-formylmethionyl-tRNA by promoting its recognition by IF2 and preventing the misappropriation of this tRNA by the elongation apparatus. In Escherichia coli (strain K12), this protein is Methionyl-tRNA formyltransferase.